The sequence spans 184 residues: Photosystem I assembly protein Ycf4 (184 aa).

Transmembrane regions (helical) follow at residues 21–43 and 63–85; these read NFCW…ISSY and GLVM…CAIS.

It belongs to the Ycf4 family.

Its subcellular location is the plastid. It is found in the chloroplast thylakoid membrane. Seems to be required for the assembly of the photosystem I complex. This chain is Photosystem I assembly protein Ycf4, found in Spinacia oleracea (Spinach).